The sequence spans 471 residues: Heat shock 70 kDa protein 13 (471 aa).

Residues 1 to 22 form the signal peptide; that stretch reads MAGEMTILGSAVLTLLLAGYLA. Positions 315–337 are disordered; it reads ENDRKGPPTSDSELPKDKFSQAN.

Belongs to the heat shock protein 70 family. In terms of assembly, binds UBQLN2.

The protein localises to the microsome. It localises to the endoplasmic reticulum. In terms of biological role, has peptide-independent ATPase activity. This chain is Heat shock 70 kDa protein 13 (HSPA13), found in Bos taurus (Bovine).